We begin with the raw amino-acid sequence, 172 residues long: Large ribosomal subunit protein uL10 (172 aa).

Belongs to the universal ribosomal protein uL10 family. In terms of assembly, part of the ribosomal stalk of the 50S ribosomal subunit. The N-terminus interacts with L11 and the large rRNA to form the base of the stalk. The C-terminus forms an elongated spine to which L12 dimers bind in a sequential fashion forming a multimeric L10(L12)X complex.

Its function is as follows. Forms part of the ribosomal stalk, playing a central role in the interaction of the ribosome with GTP-bound translation factors. This Ruegeria pomeroyi (strain ATCC 700808 / DSM 15171 / DSS-3) (Silicibacter pomeroyi) protein is Large ribosomal subunit protein uL10.